A 762-amino-acid polypeptide reads, in one-letter code: cGMP-dependent protein kinase 2 (762 aa).

A disordered region spans residues 1 to 25; the sequence is MGNGSVKPKHSKHPDGQSGNLSNEA. Glycine 2 carries N-myristoyl glycine lipidation. Phosphoserine occurs at positions 110 and 117. The segment at 112-138 is disordered; that stretch reads LVSLHSRRGAKAGVSAEPTSRTYDLNK. The cGMP-binding, high affinity; cAMP-binding, moderate affinity stretch occupies residues 168-283; it reads FLKRLDPQQI…DEEYRNFLRS (116 aa). Residues 232–235, 242–243, lysine 347, 356–359, 366–367, aspartate 412, and arginine 415 each bind 3',5'-cyclic GMP; these read GELA, RT, GEKA, and RS. Residues 286–416 are cGMP-binding, high affinity; cAMP-binding, low affinity; that stretch reads LLKNLPEDKL…TLNRDDEKRH (131 aa). Serine 431 carries the phosphoserine modification. Positions 453–711 constitute a Protein kinase domain; it reads LEIIATLGVG…INDIKKHRWL (259 aa). Residues 459–467 and lysine 482 each bind ATP; that span reads LGVGGFGRV. Catalysis depends on aspartate 576, which acts as the Proton acceptor. Threonine 609 bears the Phosphothreonine mark. In terms of domain architecture, AGC-kinase C-terminal spans 712–762; that stretch reads NGFNWEGLKARSLPSPLRRELSGPIDHSYFDKYPPEKGVPPDEMSGWDKDF. A disordered region spans residues 740 to 762; it reads YFDKYPPEKGVPPDEMSGWDKDF.

The protein belongs to the protein kinase superfamily. AGC Ser/Thr protein kinase family. cGMP subfamily. Interacts with GRIA1/GLUR1. Myristoylation mediates membrane localization. As to expression, highly expressed in intestinal mucosa and is 20 times less abundant in brain and kidney. Expressed in jejunum, in the apical domain of the villus epithelium.

It is found in the apical cell membrane. It localises to the cell membrane. The catalysed reaction is L-seryl-[protein] + ATP = O-phospho-L-seryl-[protein] + ADP + H(+). It carries out the reaction L-threonyl-[protein] + ATP = O-phospho-L-threonyl-[protein] + ADP + H(+). Its activity is regulated as follows. Binding of cGMP results in enzyme activation. Functionally, crucial regulator of intestinal secretion and bone growth. Phosphorylates and activates CFTR on the plasma membrane. Plays a key role in intestinal secretion by regulating cGMP-dependent translocation of CFTR in jejunum. Acts downstream of NMDAR to activate the plasma membrane accumulation of GRIA1/GLUR1 in synapse and increase synaptic plasticity. Phosphorylates GRIA1/GLUR1 at Ser-863. Acts as regulator of gene expression and activator of the extracellular signal-regulated kinases MAPK3/ERK1 and MAPK1/ERK2 in mechanically stimulated osteoblasts. Under fluid shear stress, mediates ERK activation and subsequent induction of FOS, FOSL1/FRA1, FOSL2/FRA2 and FOSB that play a key role in the osteoblast anabolic response to mechanical stimulation. The polypeptide is cGMP-dependent protein kinase 2 (Prkg2) (Rattus norvegicus (Rat)).